The sequence spans 183 residues: Putative manganese efflux pump MntP 1 (183 aa).

6 helical membrane passes run 6 to 26 (LFLL…CIGI), 36 to 56 (MIFV…GGYI), 64 to 84 (IVPI…ILMI), 100 to 120 (IMYL…GFTT), 130 to 150 (LFMS…LGII), and 158 to 178 (ISII…LFGL).

This sequence belongs to the MntP (TC 9.B.29) family.

The protein localises to the cell membrane. In terms of biological role, probably functions as a manganese efflux pump. This is Putative manganese efflux pump MntP 1 from Clostridium botulinum (strain Hall / ATCC 3502 / NCTC 13319 / Type A).